The chain runs to 988 residues: Protein SEMI-ROLLED LEAF 2 (988 aa).

The disordered stretch occupies residues 844–865 (SVDGGLHESPITNTGSSISKTT). The segment covering 853–865 (PITNTGSSISKTT) has biased composition (polar residues).

In terms of tissue distribution, expressed in root tips, and in the vascular bundles of leaf blades, leaf sheaths, and roots, especially in their sclerenchymatous cells.

Its subcellular location is the nucleus. The protein resides in the cytoplasm. Its function is as follows. Functions in regulating leaf rolling through abaxial side leaf cell differentiation. May be involved in the transdifferentiation process from mesophyll cells to sclerenchymatous cells. This chain is Protein SEMI-ROLLED LEAF 2, found in Oryza sativa subsp. japonica (Rice).